Reading from the N-terminus, the 297-residue chain is HTH-type transcriptional regulator ArgP (297 aa).

Positions 4–60 (PDYRTLQALDAVIRERGFERAAQKLCITQSAVSQRIKQLENLFGQPLLVRTIPPRPT) constitute an HTH lysR-type domain. Residues 21-40 (FERAAQKLCITQSAVSQRIK) constitute a DNA-binding region (H-T-H motif).

Belongs to the LysR transcriptional regulatory family. As to quaternary structure, homodimer.

Its function is as follows. Controls the transcription of genes involved in arginine and lysine metabolism. The sequence is that of HTH-type transcriptional regulator ArgP from Pectobacterium atrosepticum (strain SCRI 1043 / ATCC BAA-672) (Erwinia carotovora subsp. atroseptica).